The sequence spans 667 residues: Trifunctional UDP-glucose 4,6-dehydratase/UDP-4-keto-6-deoxy-D-glucose 3,5-epimerase/UDP-4-keto-L-rhamnose-reductase RHM2 (667 aa).

15–21 (GAAGFIA) serves as a coordination point for NAD(+). Thr134 lines the substrate pocket. Catalysis depends on Asp135, which acts as the Proton donor. Active-site proton acceptor residues include Glu136 and Tyr161. Residue 389 to 395 (GKTGWLG) participates in NADP(+) binding.

The protein in the N-terminal section; belongs to the NAD(P)-dependent epimerase/dehydratase family. dTDP-glucose dehydratase subfamily. In the C-terminal section; belongs to the dTDP-4-dehydrorhamnose reductase family. NAD(+) is required as a cofactor. NADP(+) serves as cofactor. Expressed in roots, stems, leaves, seedlings, inflorescence tips, and siliques.

The catalysed reaction is UDP-alpha-D-glucose = UDP-4-dehydro-6-deoxy-alpha-D-glucose + H2O. The protein operates within carbohydrate biosynthesis. Trifunctional enzyme involved in UDP-beta-L-rhamnose biosynthesis, a precursor of the primary cell wall components rhamnogalacturonan I (RG-I) and rhamnogalacturonan II (RG-II). Catalyzes the dehydration of UDP-glucose to form UDP-4-dehydro-6-deoxy-D-glucose followed by the epimerization of the C3' and C5' positions of UDP-4-dehydro-6-deoxy-D-glucose to form UDP-4-keto-beta-L-rhamnose and the reduction of UDP-4-keto-beta-L-rhamnose to yield UDP-beta-L-rhamnose. Required for the normal seed coat epidermal development. In Arabidopsis thaliana (Mouse-ear cress), this protein is Trifunctional UDP-glucose 4,6-dehydratase/UDP-4-keto-6-deoxy-D-glucose 3,5-epimerase/UDP-4-keto-L-rhamnose-reductase RHM2.